A 272-amino-acid polypeptide reads, in one-letter code: 2-succinyl-6-hydroxy-2,4-cyclohexadiene-1-carboxylate synthase (272 aa).

Belongs to the AB hydrolase superfamily. MenH family. In terms of assembly, monomer.

The catalysed reaction is 5-enolpyruvoyl-6-hydroxy-2-succinyl-cyclohex-3-ene-1-carboxylate = (1R,6R)-6-hydroxy-2-succinyl-cyclohexa-2,4-diene-1-carboxylate + pyruvate. It participates in quinol/quinone metabolism; 1,4-dihydroxy-2-naphthoate biosynthesis; 1,4-dihydroxy-2-naphthoate from chorismate: step 3/7. Its pathway is quinol/quinone metabolism; menaquinone biosynthesis. Its function is as follows. Catalyzes a proton abstraction reaction that results in 2,5-elimination of pyruvate from 2-succinyl-5-enolpyruvyl-6-hydroxy-3-cyclohexene-1-carboxylate (SEPHCHC) and the formation of 2-succinyl-6-hydroxy-2,4-cyclohexadiene-1-carboxylate (SHCHC). The sequence is that of 2-succinyl-6-hydroxy-2,4-cyclohexadiene-1-carboxylate synthase from Yersinia pseudotuberculosis serotype O:1b (strain IP 31758).